The chain runs to 608 residues: RAS guanyl-releasing protein 2 (608 aa).

Residues 4–126 (TLDLDKGCTV…SLIDIESVPT (123 aa)) enclose the N-terminal Ras-GEF domain. Residues Ser116, Ser117, and Ser147 each carry the phosphoserine modification. A Ras-GEF domain is found at 154–387 (EPMELAEHLT…YQLSLQREPR (234 aa)). The segment at 382-405 (LQREPRSKSSPTSPTSCTPPPRPP) is disordered. EF-hand domains follow at residues 426 to 461 (HIEK…FPYL) and 463 to 490 (AFGD…SSSV). The Ca(2+) site is built by Asp439, Asp441, Asp443, His445, Glu450, Asp468, Asn470, Asp472, Cys474, and Glu479. The Phorbol-ester/DAG-type zinc-finger motif lies at 498 to 548 (VHNFQESNSLRPVACRHCKALILGIYKQGLKCRACGVNCHKQCKERLSVEC). Phosphoserine occurs at positions 554 and 575. The interval 555–596 (VSLEGSAPSPSPTHTHHRAFSFSLPRPGRRSSRPPEIREEEV) is disordered.

It belongs to the RASGRP family. In terms of assembly, forms a signaling complex with RAP1 and BRAF. Interacts with F-actin. Interacts with RAP1. In terms of tissue distribution, detected in megakaryocytes, platelet and neutrophils but not in lymphocytes (at protein level). Isoform 1 and isoform 3 are detected in brain basal glanglia, heart, lung, spleen, liver and kidney interstitial cells.

It localises to the cytoplasm. The protein resides in the cytosol. It is found in the cell membrane. The protein localises to the synapse. Its subcellular location is the synaptosome. It localises to the cell projection. The protein resides in the ruffle membrane. In terms of biological role, functions as a calcium- and DAG-regulated nucleotide exchange factor specifically activating Rap through the exchange of bound GDP for GTP. May also activate other GTPases such as RRAS, RRAS2, NRAS, KRAS but not HRAS. Functions in aggregation of platelets and adhesion of T-lymphocytes and neutrophils probably through inside-out integrin activation. May function in the muscarinic acetylcholine receptor M1/CHRM1 signaling pathway. The sequence is that of RAS guanyl-releasing protein 2 (Rasgrp2) from Mus musculus (Mouse).